Reading from the N-terminus, the 374-residue chain is Flagellar P-ring protein (374 aa).

The N-terminal stretch at 1 to 29 (MSGLGFTGVVRIAVMALLALAFLGAPAHA) is a signal peptide. Residues 296 to 311 (ESPQVSQPNPLSNGRT) show a composition bias toward polar residues. The tract at residues 296-316 (ESPQVSQPNPLSNGRTVMTPR) is disordered.

Belongs to the FlgI family. The basal body constitutes a major portion of the flagellar organelle and consists of four rings (L,P,S, and M) mounted on a central rod.

It is found in the periplasm. The protein resides in the bacterial flagellum basal body. Functionally, assembles around the rod to form the L-ring and probably protects the motor/basal body from shearing forces during rotation. This is Flagellar P-ring protein from Nitrobacter winogradskyi (strain ATCC 25391 / DSM 10237 / CIP 104748 / NCIMB 11846 / Nb-255).